The chain runs to 174 residues: DNA-directed RNA polymerase IV subunit 7 (174 aa).

The protein belongs to the eukaryotic RPB7/RPC8 RNA polymerase subunit family. In terms of assembly, component of the RNA polymerase IV complex. Interacts with NRPD1.

It is found in the nucleus. DNA-dependent RNA polymerase catalyzes the transcription of DNA into RNA using the four ribonucleoside triphosphates as substrates. Component of RNA polymerase IV which mediates 24-nt short-interfering RNAs (siRNA) accumulation. Implicated in siRNA-directed heterochromatin formation through the action of DCL3 and AGO4, and subsequent DNA methylation-dependent silencing of targeted sequences. Essential component of a self-reinforcing loop coupling de novo DNA methylation to siRNA production. Required for intercellular but not intracellular RNA interference (RNAi) leading to systemic post-transcriptional gene silencing. Involved in the maintenance of post-transcriptional RNA silencing. The protein is DNA-directed RNA polymerase IV subunit 7 (NRPD7) of Arabidopsis thaliana (Mouse-ear cress).